A 436-amino-acid polypeptide reads, in one-letter code: GTPase Der (436 aa).

2 consecutive EngA-type G domains span residues 4-167 (PTVA…PVEE) and 175-351 (IRFS…ESQN). GTP contacts are provided by residues 10 to 17 (GRPNVGKS), 57 to 61 (DTGGI), 119 to 122 (NKVD), 181 to 188 (GRPNVGKS), 229 to 233 (DTAGM), and 294 to 297 (NKWD). A KH-like domain is found at 352–436 (KRIPSAVLND…PIHLIARKRK (85 aa)).

This sequence belongs to the TRAFAC class TrmE-Era-EngA-EngB-Septin-like GTPase superfamily. EngA (Der) GTPase family. Associates with the 50S ribosomal subunit.

Functionally, GTPase that plays an essential role in the late steps of ribosome biogenesis. The sequence is that of GTPase Der from Streptococcus pyogenes serotype M1.